A 709-amino-acid chain; its full sequence is Elongation factor G (709 aa).

Residues 10-295 enclose the tr-type G domain; sequence NQVRNIGIMA…AVVDYLPSPE (286 aa). Residues 19–26, 91–95, and 145–148 each bind GTP; these read AHIDAGKT, DTPGH, and NKMD.

It belongs to the TRAFAC class translation factor GTPase superfamily. Classic translation factor GTPase family. EF-G/EF-2 subfamily.

It is found in the cytoplasm. Catalyzes the GTP-dependent ribosomal translocation step during translation elongation. During this step, the ribosome changes from the pre-translocational (PRE) to the post-translocational (POST) state as the newly formed A-site-bound peptidyl-tRNA and P-site-bound deacylated tRNA move to the P and E sites, respectively. Catalyzes the coordinated movement of the two tRNA molecules, the mRNA and conformational changes in the ribosome. In Bifidobacterium animalis subsp. lactis (strain AD011), this protein is Elongation factor G.